Consider the following 126-residue polypeptide: Histone H2B type F-S (126 aa).

The segment covering 1–12 (MPEPAKSAPAPK) has biased composition (low complexity). Residues 1 to 36 (MPEPAKSAPAPKKGSKKAVTKAQKKDGRKRKRSRKE) are disordered. An N-acetylproline modification is found at P2. E3 is subject to ADP-ribosyl glutamic acid. K6 carries the N6-(2-hydroxyisobutyryl)lysine; alternate modification. K6 bears the N6-(beta-hydroxybutyryl)lysine; alternate mark. K6 carries the N6-acetyllysine; alternate modification. K6 bears the N6-butyryllysine; alternate mark. K6 carries the post-translational modification N6-crotonyllysine; alternate. K6 carries the post-translational modification N6-lactoyllysine; alternate. A Glycyl lysine isopeptide (Lys-Gly) (interchain with G-Cter in SUMO2); alternate cross-link involves residue K6. An ADP-ribosylserine modification is found at S7. K12 bears the N6-(beta-hydroxybutyryl)lysine; alternate mark. N6-acetyllysine; alternate occurs at positions 12 and 13. N6-crotonyllysine; alternate is present on residues K12 and K13. Position 12 is an N6-lactoyllysine; alternate (K12). K13 bears the N6-(2-hydroxyisobutyryl)lysine; alternate mark. S15 is modified (phosphoserine; by STK4/MST1). An N6-acetyllysine; alternate mark is found at K16, K17, K21, and K24. An N6-crotonyllysine; alternate mark is found at K16, K17, K21, and K24. Residues K16, K17, K21, and K24 each carry the N6-lactoyllysine; alternate modification. N6-(beta-hydroxybutyryl)lysine; alternate is present on residues K17 and K21. K17 carries the N6-glutaryllysine; alternate modification. K21 and K24 each carry N6-(2-hydroxyisobutyryl)lysine; alternate. At K21 the chain carries N6-butyryllysine; alternate. K21 participates in a covalent cross-link: Glycyl lysine isopeptide (Lys-Gly) (interchain with G-Cter in SUMO2); alternate. K25 carries the N6-(2-hydroxyisobutyryl)lysine modification. Position 35 is an N6-(2-hydroxyisobutyryl)lysine; alternate (K35). At K35 the chain carries N6-(beta-hydroxybutyryl)lysine; alternate. N6-crotonyllysine; alternate is present on K35. At K35 the chain carries N6-glutaryllysine; alternate. K35 carries the post-translational modification N6-succinyllysine; alternate. Residue K35 forms a Glycyl lysine isopeptide (Lys-Gly) (interchain with G-Cter in ubiquitin); alternate linkage. E36 bears the PolyADP-ribosyl glutamic acid mark. Phosphoserine; by AMPK is present on S37. N6-(2-hydroxyisobutyryl)lysine; alternate occurs at positions 44, 47, and 58. K44 carries the post-translational modification N6-lactoyllysine; alternate. N6-glutaryllysine; alternate occurs at positions 44 and 47. Position 47 is an N6-methyllysine; alternate (K47). K58 carries the post-translational modification N6,N6-dimethyllysine; alternate. R80 carries the dimethylated arginine modification. K86 carries the post-translational modification N6-(2-hydroxyisobutyryl)lysine; alternate. K86 carries the N6-(beta-hydroxybutyryl)lysine; alternate modification. K86 bears the N6-acetyllysine; alternate mark. K86 is modified (N6-lactoyllysine; alternate). K86 carries the post-translational modification N6,N6,N6-trimethyllysine; alternate. Residues R87 and R93 each carry the omega-N-methylarginine modification. The residue at position 109 (K109) is an N6-(2-hydroxyisobutyryl)lysine; alternate. K109 carries the N6-lactoyllysine; alternate modification. At K109 the chain carries N6-glutaryllysine; alternate. K109 is subject to N6-methyllysine; alternate. S113 carries O-linked (GlcNAc) serine glycosylation. T116 bears the Phosphothreonine mark. N6-(2-hydroxyisobutyryl)lysine; alternate is present on residues K117 and K121. N6-(beta-hydroxybutyryl)lysine; alternate occurs at positions 117 and 121. An N6-lactoyllysine; alternate mark is found at K117 and K121. An N6-glutaryllysine; alternate mark is found at K117 and K121. N6-succinyllysine; alternate occurs at positions 117 and 121. K117 bears the N6-malonyllysine; alternate mark. K117 is modified (N6-methylated lysine; alternate). K121 participates in a covalent cross-link: Glycyl lysine isopeptide (Lys-Gly) (interchain with G-Cter in ubiquitin); alternate.

This sequence belongs to the histone H2B family. As to quaternary structure, the nucleosome is a histone octamer containing two molecules each of H2A, H2B, H3 and H4 assembled in one H3-H4 heterotetramer and two H2A-H2B heterodimers. The octamer wraps approximately 147 bp of DNA. Monoubiquitination at Lys-35 (H2BK34Ub) by the MSL1/MSL2 dimer is required for histone H3 'Lys-4' (H3K4me) and 'Lys-79' (H3K79me) methylation and transcription activation at specific gene loci, such as HOXA9 and MEIS1 loci. Similarly, monoubiquitination at Lys-121 (H2BK120Ub) by the RNF20/40 complex gives a specific tag for epigenetic transcriptional activation and is also prerequisite for histone H3 'Lys-4' and 'Lys-79' methylation. It also functions cooperatively with the FACT dimer to stimulate elongation by RNA polymerase II. H2BK120Ub also acts as a regulator of mRNA splicing: deubiquitination by USP49 is required for efficient cotranscriptional splicing of a large set of exons. Post-translationally, phosphorylation at Ser-37 (H2BS36ph) by AMPK in response to stress promotes transcription. Phosphorylated on Ser-15 (H2BS14ph) by STK4/MST1 during apoptosis; which facilitates apoptotic chromatin condensation. Also phosphorylated on Ser-15 in response to DNA double strand breaks (DSBs), and in correlation with somatic hypermutation and immunoglobulin class-switch recombination. In terms of processing, glcNAcylation at Ser-113 promotes monoubiquitination of Lys-121. It fluctuates in response to extracellular glucose, and associates with transcribed genes. ADP-ribosylated by PARP1 or PARP2 on Ser-7 (H2BS6ADPr) in response to DNA damage. H2BS6ADPr promotes recruitment of CHD1L. Mono-ADP-ribosylated on Glu-3 (H2BE2ADPr) by PARP3 in response to single-strand breaks. Poly ADP-ribosylation on Glu-36 (H2BE35ADPr) by PARP1 regulates adipogenesis: it inhibits phosphorylation at Ser-37 (H2BS36ph), thereby blocking expression of pro-adipogenetic genes. Post-translationally, crotonylation (Kcr) is specifically present in male germ cells and marks testis-specific genes in post-meiotic cells, including X-linked genes that escape sex chromosome inactivation in haploid cells. Crotonylation marks active promoters and enhancers and confers resistance to transcriptional repressors. It is also associated with post-meiotically activated genes on autosomes. In terms of processing, lactylated in macrophages by EP300/P300 by using lactoyl-CoA directly derived from endogenous or exogenous lactate, leading to stimulates gene transcription.

It localises to the nucleus. It is found in the chromosome. Core component of nucleosome. Nucleosomes wrap and compact DNA into chromatin, limiting DNA accessibility to the cellular machineries which require DNA as a template. Histones thereby play a central role in transcription regulation, DNA repair, DNA replication and chromosomal stability. DNA accessibility is regulated via a complex set of post-translational modifications of histones, also called histone code, and nucleosome remodeling. In terms of biological role, has broad antibacterial activity. May contribute to the formation of the functional antimicrobial barrier of the colonic epithelium, and to the bactericidal activity of amniotic fluid. The chain is Histone H2B type F-S from Homo sapiens (Human).